Consider the following 344-residue polypeptide: Anthranilate phosphoribosyltransferase (344 aa).

5-phospho-alpha-D-ribose 1-diphosphate-binding positions include Gly-84, 87–88 (GD), Ser-92, 94–97 (NIST), 112–120 (KHGNRSASG), and Ser-124. Gly-84 serves as a coordination point for anthranilate. Mg(2+) is bound at residue Ser-96. Asn-115 provides a ligand contact to anthranilate. Arg-170 is a binding site for anthranilate. Mg(2+) contacts are provided by Asp-229 and Glu-230.

It belongs to the anthranilate phosphoribosyltransferase family. Homodimer. Requires Mg(2+) as cofactor.

The enzyme catalyses N-(5-phospho-beta-D-ribosyl)anthranilate + diphosphate = 5-phospho-alpha-D-ribose 1-diphosphate + anthranilate. It participates in amino-acid biosynthesis; L-tryptophan biosynthesis; L-tryptophan from chorismate: step 2/5. In terms of biological role, catalyzes the transfer of the phosphoribosyl group of 5-phosphorylribose-1-pyrophosphate (PRPP) to anthranilate to yield N-(5'-phosphoribosyl)-anthranilate (PRA). This Synechococcus sp. (strain RCC307) protein is Anthranilate phosphoribosyltransferase.